Consider the following 186-residue polypeptide: Ribosome-recycling factor (186 aa).

The protein belongs to the RRF family.

It is found in the cytoplasm. Functionally, responsible for the release of ribosomes from messenger RNA at the termination of protein biosynthesis. May increase the efficiency of translation by recycling ribosomes from one round of translation to another. The chain is Ribosome-recycling factor from Bartonella quintana (strain Toulouse) (Rochalimaea quintana).